Here is a 372-residue protein sequence, read N- to C-terminus: Probable L-tyrosine/L-aspartate decarboxylase (372 aa).

Lysine 215 carries the post-translational modification N6-(pyridoxal phosphate)lysine.

This sequence belongs to the group II decarboxylase family. MfnA subfamily. Pyridoxal 5'-phosphate is required as a cofactor.

The catalysed reaction is L-tyrosine + H(+) = tyramine + CO2. It carries out the reaction L-aspartate + H(+) = beta-alanine + CO2. Its pathway is cofactor biosynthesis; methanofuran biosynthesis. It functions in the pathway cofactor biosynthesis; coenzyme A biosynthesis. Its function is as follows. Catalyzes the decarboxylation of L-tyrosine to produce tyramine for methanofuran biosynthesis. Can also catalyze the decarboxylation of L-aspartate to produce beta-alanine for coenzyme A (CoA) biosynthesis. This chain is Probable L-tyrosine/L-aspartate decarboxylase, found in Methanopyrus kandleri (strain AV19 / DSM 6324 / JCM 9639 / NBRC 100938).